The primary structure comprises 269 residues: Adenosylcobinamide-GDP ribazoletransferase (269 aa).

5 helical membrane passes run 8–28, 41–61, 70–90, 114–136, and 196–216; these read QFNLILLAVSFFTRLPVPTAI, YFPLVGWLLAALLSAFYCFML, VCLLIIFSLMLTGAIHEDGLA, IGTYGTCALICALLSKFILLSSL, and VPAVLWLPLSSAILVIVSACV.

It belongs to the CobS family. The cofactor is Mg(2+).

It is found in the cell inner membrane. The enzyme catalyses alpha-ribazole + adenosylcob(III)inamide-GDP = adenosylcob(III)alamin + GMP + H(+). The catalysed reaction is alpha-ribazole 5'-phosphate + adenosylcob(III)inamide-GDP = adenosylcob(III)alamin 5'-phosphate + GMP + H(+). It functions in the pathway cofactor biosynthesis; adenosylcobalamin biosynthesis; adenosylcobalamin from cob(II)yrinate a,c-diamide: step 7/7. Joins adenosylcobinamide-GDP and alpha-ribazole to generate adenosylcobalamin (Ado-cobalamin). Also synthesizes adenosylcobalamin 5'-phosphate from adenosylcobinamide-GDP and alpha-ribazole 5'-phosphate. In Pseudoalteromonas atlantica (strain T6c / ATCC BAA-1087), this protein is Adenosylcobinamide-GDP ribazoletransferase.